A 132-amino-acid polypeptide reads, in one-letter code: Small ribosomal subunit protein uS8 (132 aa).

The protein belongs to the universal ribosomal protein uS8 family. As to quaternary structure, part of the 30S ribosomal subunit. Contacts proteins S5 and S12.

In terms of biological role, one of the primary rRNA binding proteins, it binds directly to 16S rRNA central domain where it helps coordinate assembly of the platform of the 30S subunit. This is Small ribosomal subunit protein uS8 from Caldicellulosiruptor bescii (strain ATCC BAA-1888 / DSM 6725 / KCTC 15123 / Z-1320) (Anaerocellum thermophilum).